The following is a 267-amino-acid chain: MTIMNIQYIVECLALLREKKPLVVNITNYVVMNNTANALLALGASPIMAHSQQEMAEMMSFSGALVINIGTLDSVWTPRMHFAVEQANLNNKAVVLDPVGCGASQLRTQVARQIAEAANKLIIRANASEVIALAGENAQSKGVDALDSSDSAVGAACYVAQKYQCSVVISGETDYIVTQDAQYKLNNGHAMMPFVTGMGCTHTALTGAFAAIGDESGVVATAVLGVAGEIAAEQSAGPGSLQMNLLDTLYQLDEETLTRRLKLTVNA.

Met48 is a binding site for substrate. 2 residues coordinate ATP: Arg124 and Ser170. Substrate is bound at residue Gly197.

Belongs to the Thz kinase family. It depends on Mg(2+) as a cofactor.

It carries out the reaction 5-(2-hydroxyethyl)-4-methylthiazole + ATP = 4-methyl-5-(2-phosphooxyethyl)-thiazole + ADP + H(+). It participates in cofactor biosynthesis; thiamine diphosphate biosynthesis; 4-methyl-5-(2-phosphoethyl)-thiazole from 5-(2-hydroxyethyl)-4-methylthiazole: step 1/1. Functionally, catalyzes the phosphorylation of the hydroxyl group of 4-methyl-5-beta-hydroxyethylthiazole (THZ). In Aliivibrio fischeri (strain ATCC 700601 / ES114) (Vibrio fischeri), this protein is Hydroxyethylthiazole kinase.